The chain runs to 7388 residues: MSSSDEETLSERSCRSERSCRSERSYRSERSGSLSPCPPGDTLPWNLPLHEQKKRKSQDSVLDPAERAVVRVADERDRVQKKTFTKWVNKHLMKVRKHINDLYEDLRDGHNLISLLEVLSGIKLPREKGRMRFHRLQNVQIALDFLKQRQVKLVNIRNDDITDGNPKLTLGLIWTIILHFQISDIYISGESGDMSAKEKLLLWTQKVTAGYTGIKCTNFSSCWSDGKMFNALIHRYRPDLVDMERVQIQSNRENLEQAFEVAERLGVTRLLDAEDVDVPSPDEKSVITYVSSIYDAFPKVPEGGEGISATEVDSRWQEYQSRVDSLIPWIKQHTILMSDKTFPQNPVELKALYNQYIHFKETEILAKEREKGRIEELYKLLEVWIEFGRIKLPQGYHPNDVEEEWGKLIIEMLEREKSLRPAVERLELLLQIANKIQNGALNCEEKLTLAKNTLQADAAHLESGQPVQCESDVIMYIQECEGLIRQLQVDLQILRDENYYQLEELAFRVMRLQDELVTLRLECTNLYRKGHFTSLELVPPSTLTTTHLKAEPLTKATHSSSTSWFRKPMTRAELVAISSSEDEGNLRFVYELLSWVEEMQMKLERAEWGNDLPSVELQLETQQHIHTSVEELGSSVKEARLYEGKMSQNFHTSYAETLGKLETQYCKLKETSSFRMRHLQSLHKFVSRATAELIWLNEKEEEELAYDWSDNNSNISAKRNYFSELTMELEEKQDVFRSLQDTAELLSLENHPAKQTVEAYSAAVQSQLQWMKQLCLCVEQHVKENTAYFQFFSDARELESFLRNLQDSIKRKYSCDHNTSLSRLEDLLQDSMDEKEQLIQSKSSVASLVGRSKTIVQLKPRSPDHVLKNTISVKAVCDYRQIEITICKNDECVLEDNSQRTKWKVISPTGNEAMVPSVCFLIPPPNKDAIEMASRVEQSYQKVMALWHQLHVNTKSLISWNYLRKDLDLVQTWNLEKLRSSAPGECHQIMKNLQAHYEDFLQDSRDSVLFSVADRLRLEEEVEACKARFQHLMKSMENEDKEETVAKMYISELKNIRLRLEEYEQRVVKRIQSLASSRTDRDAWQDNALRIAEQEHTQEDLQQLRSDLDAVSMKCDSFLHQSPSSSSVPTLRSELNLLVEKMDHVYGLSTVYLNKLKTVDVIVRSIQDAELLVKGYEIKLSQEEVVLADLSALEAHWSTLRHWLSDVKDKNSVFSVLDEEIAKAKVVAEQMSRLTPERNLDLERYQEKGSQLQERWHRVIAQLEIRQSELESIQEVLGDYRACHGTLIKWIEETTAQQEMMKPGQAEDSRVLSEQLSQQTALFAEIERNQTKLDQCQKFSQQYSTIVKDYELQLMTYKAFVESQQKSPGKRRRMLSSSDAITQEFMDLRTRYTALVTLTTQHVKYISDALRRLEEEEKVVEEEKQEHVEKVKELLGWVSTLARNTQGKATSSETKESTDIEKAILEQQVLSEELTTKKEQVSEAIKTSQIFLAKHGHKLSEKEKKQISEQLNALNKAYHDLCDGSANQLQQLQSQLAHQTEQKECRAVAGVIDLGTVEIFPIFKAMQKGLLDQDTGLVLLESQVIMSGLIAPETGENLSLEEGIARNLINPQMYQQLRELQDALALISRLTESRGPLSVVEAIEKRIISETVGLKILEAHLATGGFSLSPSENCINLEEAFHQGLISAWLHSVLESYLRTSKNLIDPNTAEKIGLLDLMQRCIVHQESGFKLLPVKQLAGGMVSLKSGRKVSIFRAVQEGLIDRQVTVRLLEAQLFAGGIVDPRTGHRLTVEEAVRHNLIDQDMACAILIRQLQTGGIIDTVTGQRLTIDEAVSNDLVAAKIALVILESLWSFMGLLWPESGEILPITDALEQGIVSTELAHKILSNRQHIKALFLPATTEILSWKKAIESGILDRDLANNLKSICIPDVMPHMQLADSAEQNINPGAAVLPCSKSHPKATASQSENLLFQLMTHSYINVQNGQRLLLLDKELMETLTSRDEYQTSPPKVVEIGHQRQKTPEGLQESANVKISGTFSSGWTVRLPEFQFSSQNKEYPDREDCTTEKGKKTTVETEDSSVENPEQDLFVEQKERNPNIDALKVINKVKLEVQRQLIGTQREDQTAVSVRENASRGHLLTIPPAEAEGVPLVVDKDVFSVETPKKEHQPLRNTSFTCQNEQAHTLETEYIHDETGGSHIKPQSKKLQVQVKKTLGIKLELKSETDGNVHPLDKKEMLKKTFLAKDDHKESQEAQNIAGGSMMMSEKTDEEDSGREIFLSCSHPLELLEEATLNVLSAQLLDGGIFHEQTGQKLLLNEAISRGIVPSHTAVKLMEKLNMFQGFFDSQTCESLTTEEVINEGLMDEKLLHNVLMADKAISGVLDPRTQTLCSVKDAVTVGLLDKETATRILERQVVTGGIIDLKRGKKVSVTLASTLGLVDVADQPELINLEKASKGRDAEKTVRERLISLQMETTGLIDPDSKAPLTVVQSIDRGLLEREEAVRLLTKQVVDGGIIHHISGMRLSVDNAFRHGLIGEDLAEKLKRVENLNIHQIFNPETKENISLPKAIKLDLITSDLKREIQEVQAFTGNFVDLISGQRLTLAEAKKEGLLTNEAVLSPGMMHGIVDPENCRIVPYSELVKKCKIDIESGQRYLEVIPFSDIKDGVSDKVLTLSQAIQLGKVDFASTLKVLEAQANTGGIIDTATGKRLTLASALEEKLVDENMVRIIASHQVLNGGIVDIFSDQRVTLVEAIEKRLISPELANMIQIDSSEFSDHRAQIEKQEGIEVCALQNEFLGKDMLIACNQTAEMSCNKVEESERLFQVENQSAQEKVKVRVSDGEQAKKSREISLKEFGCKDQRKPRMSSDAKEFISIINPHNLKGKSLGQVSLTHPYSECDFKLKEVARNNMGNDTNEEQEKAVTKIEIISHMKQSTSCLDSEEIRENQGEVILEVQETYCETSGKLPSEQVLQQPMNARVKSKREKREVIVEESIRTCKPAFLSEEKLYQETAIRDEHDSHIKSQPREMTSSEKGKEADTEMGFSITFKIEESSSQVVPQGISVKHLDALTLFSSKQANEGKVNNLSLCLTLKPEENLSREIACGAQSEPFPCMTPRPEGLHYQESDGKAQVTGPSQISKTDKSFQGTTRQETNYQDSWVTSKTKETKHQISSSNECKEKSYQEVSFDPARGLKLEEITVSRPDSKEVRYLEFSDRKDLHHQGSKSDDKLCGTLKSEIATQELTGEKFLEMANPNVAGLEAGSIEDIVTQRGSRVLGSFLPEKLFKGVSQKENTGQQNAIISPTVLETSEEKTVSLTVCSAVKTEKTPQEKLRESPGSEQTPFMTAPEGKGNGGVNPEPFRATQNVFTRQLCLEHDEKLVSYLSLLRNIEMRTKQIQPLELNLAELQDLLCQAKVLERELKDLTTLVSQELECVNQIIISQPQEVPAQLLKALEKDAKNLQKSLSSVSDTWNSRLLHFQNAVEIEKTKVLNQHTQLEGRLQDLRAWVGNKNLILNSKGSNSEIDVDSLNLCLQQYEDLKQPMAERKAQLDALAFDIQFFISEHAQDLSPQQNRQMLRLLNELQRSFQDILEQTAAQVDALQGHLQQMEQEALVKTLQKQQNTCHQQLEDLCSWVGQAERALAGHQGRTTQQDLSALQKNQSDLKDLQDDIQNRATSFATVVKDIEGFMEENQTKLSPRELTALREKLHQAKEQYEALQEETRVAQKELEEAVTSALQQETEKSKAAKELAENKKKIDALLDWVTSVGSSGGQLLTNLPGMEQLSGASLEKGALDTTDGYMGVNQAPEKLDKQCEMMKARHQELLSQQQNFILATQSAQAFLDQHGHNLTPEEQQMLQQKLGELKEQYSTSLAQSEAELKQVQTLQDELQKFLQDHKEFESWLERSEKELENMHKGGSSPETLPSLLKRQGSFSEDVISHKGDLRFVTISGQKVLDMENSFKEGKEPSEIGNLVKDKLKDATERYTALHSKCTRLGSHLNMLLGQYHQFQNSADSLQAWMQACEANVEKLLSDTVASDPGVLQEQLATTKQLQEELAEHQVPVEKLQKVARDIMEIEGEPAPDHRHVQETTDSILSHFQSLSYSLAERSSLLQKAIAQSQSVQESLESLLQSIGEVEQNLEGKQVSSLSSGVIQEALATNMKLKQDIARQKSSLEATREMVTRFMETADSTTAAVLQGKLAEVSQRFEQLCLQQQEKESSLKKLLPQAEMFEHLSGKLQQFMENKSRMLASGNQPDQDITHFFQQIQELNLEMEDQQENLDTLEHLVTELSSCGFALDLCQHQDRVQNLRKDFTELQKTVKEREKDASSCQEQLDEFRKLVRTFQKWLKETEGSIPPTETSMSAKELEKQIEHLKSLLDDWASKGTLVEEINCKGTSLENLIMEITAPDSQGKTGSILPSVGSSVGSVNGYHTCKDLTEIQCDMSDVNLKYEKLGGVLHERQESLQAILNRMEEVHKEANSVLQWLESKEEVLKSMDAMSSPTKTETVKAQAESNKAFLAELEQNSPKIQKVKEALAGLLVTYPNSQEAENWKKIQEELNSRWERATEVTVARQRQLEESASHLACFQAAESQLRPWLMEKELMMGVLGPLSIDPNMLNAQKQQVQFMLKEFEARRQQHEQLNEAAQGILTGPGDVSLSTSQVQKELQSINQKWVELTDKLNSRSSQIDQAIVKSTQYQELLQDLSEKVRAVGQRLSVQSAISTQPEAVKQQLEETSEIRSDLEQLDHEVKEAQTLCDELSVLIGEQYLKDELKKRLETVALPLQGLEDLAADRINRLQAALASTQQFQQMFDELRTWLDDKQSQQAKNCPISAKLERLQSQLQENEEFQKSLNQHSGSYEVIVAEGESLLLSVPPGEEKRTLQNQLVELKNHWEELSKKTADRQSRLKDCMQKAQKYQWHVEDLVPWIEDCKAKMSELRVTLDPVQLESSLLRSKAMLNEVEKRRSLLEILNSAADILINSSEADEDGIRDEKAGINQNMDAVTEELQAKTGSLEEMTQRLREFQESFKNIEKKVEGAKHQLEIFDALGSQACSNKNLEKLRAQQEVLQALEPQVDYLRNFTQGLVEDAPDGSDASQLLHQAEVAQQEFLEVKQRVNSGCVMMENKLEGIGQFHCRVREMFSQLADLDDELDGMGAIGRDTDSLQSQIEDVRLFLNKIHVLKLDIEASEAECRHMLEEEGTLDLLGLKRELEALNKQCGKLTERGKARQEQLELTLGRVEDFYRKLKGLNDATTAAEEAEALQWVVGTEVEIINQQLADFKMFQKEQVDPLQMKLQQVNGLGQGLIQSAGKDCDVQGLEHDMEEINARWNTLNKKVAQRIAQLQEALLHCGKFQDALEPLLSWLADTEELIANQKPPSAEYKVVKAQIQEQKLLQRLLDDRKATVDMLQAEGGRIAQSAELADREKITGQLESLESRWTELLSKAAARQKQLEDILVLAKQFHETAEPISDFLSVTEKKLANSEPVGTQTAKIQQQIIRHKALNEEIVNRKKNVDQAIKNGQALLKQTTGEEVLLIQEKLDGIKTRYADITVTSSKALRTLEQARQLATKFQSTYEELTGWLREVEEELATSGGQSPTGEQIPQFQQRQKELKKEVMEHRLVLDTVNEVSRALLELVPWRAREGLDKLVSDANEQYKLVSDTIGQRVDEIDAAIQRSQQYEQAADAELAWVAETKRKLMALGPIRLEQDQTTAQLQVQKAFSIDIIRHKDSMDELFSHRSEIFGTCGEEQKTVLQEKTESLIQQYEAISLLNSERYARLERAQVLVNQFWETYEELSPWIEETRALIAQLPSPAIDHEQLRQQQEEMRQLRESIAEHKPHIDKLLKIGPQLKELNPEEGEMVEEKYQKAENMYAQIKEEVRQRALALDEAVSQSTQITEFHDKIEPMLETLENLSSRLRMPPLIPAEVDKIRECISDNKSATVELEKLQPSFEALKRRGEELIGRSQGADKDLAAKEIQDKLDQMVFFWEDIKARAEEREIKFLDVLELAEKFWYDMAALLTTIKDTQDIVHDLESPGIDPSIIKQQVEAAETIKEETDGLHEELEFIRILGADLIFACGETEKPEVRKSIDEMNNAWENLNKTWKERLEKLEDAMQAAVQYQDTLQAMFDWLDNTVIKLCTMPPVGTDLNTVKDQLNEMKEFKVEVYQQQIEMEKLNHQGELMLKKATDETDRDIIREPLTELKHLWENLGEKIAHRQHKLEGALLALGQFQHALEELMSWLTHTEELLDAQRPISGDPKVIEVELAKHHVLKNDVLAHQATVETVNKAGNELLESSAGDDASSLRSRLEAMNQCWESVLQKTEEREQQLQSTLQQAQGFHSEIEDFLLELTRMESQLSASKPTGGLPETAREQLDTHMELYSQLKAKEETYNQLLDKGRLMLLSRDDSGSGSKTEQSVALLEQKWHVVSSKMEERKSKLEEALNLATEFQNSLQEFINWLTLAEQSLNIASPPSLILNTVLSQIEEHKVFANEVNAHRDQIIELDQTGNQLKFLSQKQDVVLIKNLLVSVQSRWEKVVQRSIERGRSLDDARKRAKQFHEAWKKLIDWLEDAESHLDSELEISNDPDKIKLQLSKHKEFQKTLGGKQPVYDTTIRTGRALKEKTLLPEDSQKLDNFLGEVRDKWDTVCGKSVERQHKLEEALLFSGQFMDALQALVDWLYKVEPQLAEDQPVHGDLDLVMNLMDAHKVFQKELGKRTGTVQVLKRSGRELIENSRDDTTWVKGQLQELSTRWDTVCKLSVSKQSRLEQALKQAEVFRDTVHMLLEWLSEAEQTLRFRGALPDDTEALQSLIDTHKEFMKKVEEKRVDVNSAVAMGEVILAVCHPDCITTIKHWITIIRARFEEVLTWAKQHQQRLETALSELVANAELLEELLAWIQWAETTLIQRDQEPIPQNIDRVKALIAEHQTFMEEMTRKQPDVDRVTKTYKRKNIEPTHAPFIEKSRSGGRKSLSQPTPPPMPILSQSEAKNPRINQLSARWQQVWLLALERQRKLNDALDRLEELKEFANFDFDVWRKKYMRWMNHKKSRVMDFFRRIDKDQDGKITRQEFIDGILASKFPTTKLEMTAVADIFDRDGDGYIDYYEFVAALHPNKDAYRPTTDADKIEDEVTRQVAQCKCAKRFQVEQIGENKYRFGDSQQLRLVRILRSTVMVRVGGGWMALDEFLVKNDPCRARGRTNIELREKFILPEGASQGMTPFRSRGRRSKPSSRAASPTRSSSSASQSNHSCTSMPSSPATPASGTKVIPSSGSKLKRPTPTFHSSRTSLAGDTSNSSSPASTGAKTNRADPKKSASRPGSRAGSRAGSRASSRRGSDASDFDLLETQSACSDTSESSAAGGQGNSRRGLNKPSKIPTMSKKTTTASPRTPGPKR.

Residues M1 to L47 are disordered. The segment at M1–D295 is actin-binding. S4 carries the phosphoserine modification. A compositionally biased stretch (basic and acidic residues) spans L9 to R30. S35 and S57 each carry phosphoserine. Calponin-homology (CH) domains lie at R78–Q181 and M194–P298. LRR repeat units follow at residues Q148–G171 and L240–R264. Phosphoserine is present on S280. 2 LRR repeats span residues L377–N399 and L441–G464. Residue S814 is modified to Phosphoserine. The SH3 domain maps to K868–P925. One copy of the LRR 5 repeat lies at I1050 to S1073. Phosphoserine is present on S1122. LRR repeat units lie at residues V1128–N1154, L1187–K1210, and H1257–A1282. S1367 and S1376 each carry phosphoserine. Plectin repeat units lie at residues L1577 to Q1621, L1654 to S1696, R1769 to L1809, R1811 to E1848, and G1855 to S1886. A phosphoserine mark is found at S2006 and S2051. The interval S2051 to D2085 is disordered. A compositionally biased stretch (basic and acidic residues) spans E2055 to V2072. Phosphoserine is present on S2077. 6 Plectin repeats span residues L2290–E2332, N2367–Q2410, V2411–D2437, R2501–V2543, E2581–E2612, and L2686–Q2730. Disordered regions lie at residues E3013–A3034 and S3104–K3174. Residues E3115–G3124 are compositionally biased toward basic and acidic residues. A Phosphoserine modification is found at S3122. Residues T3129–S3158 show a composition bias toward polar residues. LRR repeat units follow at residues L3239 to D3262 and V3264 to G3283. The segment covering E3321 to P3332 has biased composition (basic and acidic residues). The disordered stretch occupies residues E3321–G3350. The residue at position 3331 (S3331) is a Phosphoserine. LRR repeat units lie at residues Q3646 to R3669 and L3696 to A3720. Spectrin repeat units lie at residues E3883–K3957 and Q4000–Q4108. S3927 is subject to Phosphoserine. Residues K3936 to E3958 form an LRR 13 repeat. LRR repeat units follow at residues L4125–E4150 and I4261–S4287. One copy of the Spectrin 3 repeat lies at R4466 to E4574. 3 positions are modified to phosphoserine: S4495, S4496, and S4521. LRR repeat units lie at residues K4511 to L4534, G4601 to L4624, and K4769 to R4792. Spectrin repeat units lie at residues T4800–K4904 and K4909–E5012. Residues S4836 and S4962 each carry the phosphoserine modification. 3 LRR repeats span residues N5051 to N5076, N5172 to E5194, and K5281 to S5304. 3 Spectrin repeats span residues E5236 to E5341, K5348 to D5450, and A5455 to L5557. T5435 is modified (phosphothreonine). A disordered region spans residues E5583–Q5603. Over residues S5588–Q5603 the composition is skewed to polar residues. LRR repeat units follow at residues M5695–I5719 and A5804–E5828. Spectrin repeat units lie at residues N5783–E5885, L6005–D6110, A6115–E6219, L6225–Q6328, Q6333–E6439, L6443–D6547, R6552–E6658, Q6665–Q6766, and A6771–E6874. S5808 and S6032 each carry phosphoserine. Position 6210 is an N6-acetyllysine (K6210). The LRR 24 repeat unit spans residues R6496–V6519. Residues P6951 to Q6981 are disordered. S6967 carries the post-translational modification Phosphoserine. EF-hand domains are found at residues H7041–P7076 and T7077–A7112. Residues D7054, D7056, D7058, K7060, E7065, D7090, D7092, D7094, Y7096, and E7101 each coordinate Ca(2+). In terms of domain architecture, GAR spans T7117 to R7189. The segment at T7117–R7388 is C-terminal tail. The disordered stretch occupies residues P7205 to R7388. Residues S7225–T7259 show a composition bias toward low complexity. The residue at position 7254 (T7254) is a Phosphothreonine. The span at T7275 to K7299 shows a compositional bias: polar residues. A phosphoserine mark is found at S7279 and S7292. Residues S7310–A7324 show a composition bias toward low complexity. Positions G7313–R7328 are 4 X 4 AA tandem repeats of [GS]-S-R-[AR]. Phosphoserine occurs at positions 7330 and 7333. Positions E7339–R7361 are enriched in polar residues.

This sequence belongs to the plakin or cytolinker family. As to quaternary structure, isoform 2: Interacts with MAPRE1, CLASP1, CLASP2, AXIN1 and LRP6. Isoform 2: Found in a complex composed of MACF1, APC, AXIN1, CTNNB1 and GSK3B. Isoform 2: Interacts with GOLGA4. Isoform 2: Interacts with CAMSAP3. In terms of processing, phosphorylated on serine residues in the C-terminal tail by GSK3B. Phosphorylation inhibits microtubule-binding and this plays a critical role in bulge stem cell migration and skin wound repair. Wnt-signaling can repress phosphorylation. Isoform 2: Ubiquitously expressed. Isoform 1: Expressed in cell lines NCI-H460, A-549 and HaCaT. Isoform 4: Expressed in heart, lung, pituitary and placenta, not found in brain, kidney, liver, pancreas or skeletal muscle.

Its subcellular location is the cytoplasm. It is found in the cytoskeleton. The protein resides in the golgi apparatus. It localises to the cell membrane. The protein localises to the cell projection. Its subcellular location is the ruffle membrane. Its function is as follows. F-actin-binding protein which plays a role in cross-linking actin to other cytoskeletal proteins and also binds to microtubules. Plays an important role in ERBB2-dependent stabilization of microtubules at the cell cortex. Acts as a positive regulator of Wnt receptor signaling pathway and is involved in the translocation of AXIN1 and its associated complex (composed of APC, CTNNB1 and GSK3B) from the cytoplasm to the cell membrane. Has actin-regulated ATPase activity and is essential for controlling focal adhesions (FAs) assembly and dynamics. Interaction with CAMSAP3 at the minus ends of non-centrosomal microtubules tethers microtubules minus-ends to actin filaments, regulating focal adhesion size and cell migration. May play role in delivery of transport vesicles containing GPI-linked proteins from the trans-Golgi network through its interaction with GOLGA4. Plays a key role in wound healing and epidermal cell migration. Required for efficient upward migration of bulge cells in response to wounding and this function is primarily rooted in its ability to coordinate microtubule dynamics and polarize hair follicle stem cells. As a regulator of actin and microtubule arrangement and stabilization, it plays an essential role in neurite outgrowth, branching and spine formation during brain development. The protein is Microtubule-actin cross-linking factor 1, isoforms 1/2/3/4/5 of Homo sapiens (Human).